The chain runs to 724 residues: Catalase-peroxidase (724 aa).

The segment at residues 98-226 is a cross-link (tryptophyl-tyrosyl-methioninium (Trp-Tyr) (with M-252)); sequence WHSAGTYRIA…LAAVMMGLIY (129 aa). Residue His-99 is the Proton acceptor of the active site. The segment at residues 226–252 is a cross-link (tryptophyl-tyrosyl-methioninium (Tyr-Met) (with W-98)); sequence YVNPEGVDGNPDPLKTAQDMRVTFARM. His-267 contributes to the heme b binding site.

The protein belongs to the peroxidase family. Peroxidase/catalase subfamily. Homodimer or homotetramer. Requires heme b as cofactor. Formation of the three residue Trp-Tyr-Met cross-link is important for the catalase, but not the peroxidase activity of the enzyme.

It carries out the reaction H2O2 + AH2 = A + 2 H2O. The enzyme catalyses 2 H2O2 = O2 + 2 H2O. Functionally, bifunctional enzyme with both catalase and broad-spectrum peroxidase activity. The protein is Catalase-peroxidase of Vibrio cholerae serotype O1 (strain ATCC 39315 / El Tor Inaba N16961).